The following is a 397-amino-acid chain: tRNA-specific 2-thiouridylase MnmA (397 aa).

ATP is bound by residues 19-26 (AMSGGVDS) and Leu45. The active-site Nucleophile is Cys113. Cys113 and Cys210 are oxidised to a cystine. Gly137 serves as a coordination point for ATP. The segment at 160 to 162 (RDQ) is interaction with tRNA. Catalysis depends on Cys210, which acts as the Cysteine persulfide intermediate.

Belongs to the MnmA/TRMU family.

Its subcellular location is the cytoplasm. The enzyme catalyses S-sulfanyl-L-cysteinyl-[protein] + uridine(34) in tRNA + AH2 + ATP = 2-thiouridine(34) in tRNA + L-cysteinyl-[protein] + A + AMP + diphosphate + H(+). Catalyzes the 2-thiolation of uridine at the wobble position (U34) of tRNA, leading to the formation of s(2)U34. This chain is tRNA-specific 2-thiouridylase MnmA, found in Bradyrhizobium sp. (strain BTAi1 / ATCC BAA-1182).